Consider the following 58-residue polypeptide: UPF0391 membrane protein Plav_0056 (58 aa).

2 consecutive transmembrane segments (helical) span residues 4–24 (WAAVFFIIAVIAAVLGFGGLV) and 30–50 (IAQILFFIFLVLFVVSLIFGV).

It belongs to the UPF0391 family.

Its subcellular location is the cell membrane. This is UPF0391 membrane protein Plav_0056 from Parvibaculum lavamentivorans (strain DS-1 / DSM 13023 / NCIMB 13966).